A 170-amino-acid polypeptide reads, in one-letter code: RxLR effector protein CRE16 (170 aa).

Positions 1 to 23 (MSKLFYAFAVLAVHVLTSSPTTA) are cleaved as a signal peptide. Positions 47–68 (RFLRSIHEGEDSLKPSAFSEER) match the RxLR-dEER motif.

This sequence belongs to the RxLR effector family.

The protein localises to the secreted. It is found in the host cytoplasm. The protein resides in the host nucleus. Functionally, effector that is involved in host plant infection. Contributes to virulence during the early infection stage, by inhibiting plant defense responses induced by both PAMP-triggered immunity (PTI) and effector-triggered immunity (ETI). This is RxLR effector protein CRE16 from Phytophthora infestans (strain T30-4) (Potato late blight agent).